A 139-amino-acid chain; its full sequence is Ribulose bisphosphate carboxylase small subunit (139 aa).

This sequence belongs to the RuBisCO small chain family. In terms of assembly, heterohexadecamer of 8 large and 8 small subunits.

The protein resides in the plastid. It localises to the chloroplast. Its function is as follows. RuBisCO catalyzes two reactions: the carboxylation of D-ribulose 1,5-bisphosphate, the primary event in carbon dioxide fixation, as well as the oxidative fragmentation of the pentose substrate in the photorespiration process. Both reactions occur simultaneously and in competition at the same active site. Although the small subunit is not catalytic it is essential for maximal activity. This chain is Ribulose bisphosphate carboxylase small subunit, found in Ectocarpus siliculosus (Brown alga).